The primary structure comprises 96 residues: Small ribosomal subunit protein bS20 (96 aa).

Belongs to the bacterial ribosomal protein bS20 family.

Its function is as follows. Binds directly to 16S ribosomal RNA. In Anaplasma marginale (strain St. Maries), this protein is Small ribosomal subunit protein bS20.